The sequence spans 357 residues: N-acetyl-gamma-glutamyl-phosphate reductase (357 aa).

Cys-160 is a catalytic residue.

The protein belongs to the NAGSA dehydrogenase family. Type 1 subfamily.

The protein localises to the cytoplasm. The catalysed reaction is N-acetyl-L-glutamate 5-semialdehyde + phosphate + NADP(+) = N-acetyl-L-glutamyl 5-phosphate + NADPH + H(+). It functions in the pathway amino-acid biosynthesis; L-arginine biosynthesis; N(2)-acetyl-L-ornithine from L-glutamate: step 3/4. Functionally, catalyzes the NADPH-dependent reduction of N-acetyl-5-glutamyl phosphate to yield N-acetyl-L-glutamate 5-semialdehyde. This chain is N-acetyl-gamma-glutamyl-phosphate reductase, found in Prochlorococcus marinus (strain MIT 9313).